Reading from the N-terminus, the 258-residue chain is Imidazole glycerol phosphate synthase subunit HisF (258 aa).

Catalysis depends on residues Asp11 and Asp130.

Belongs to the HisA/HisF family. As to quaternary structure, heterodimer of HisH and HisF.

The protein localises to the cytoplasm. It catalyses the reaction 5-[(5-phospho-1-deoxy-D-ribulos-1-ylimino)methylamino]-1-(5-phospho-beta-D-ribosyl)imidazole-4-carboxamide + L-glutamine = D-erythro-1-(imidazol-4-yl)glycerol 3-phosphate + 5-amino-1-(5-phospho-beta-D-ribosyl)imidazole-4-carboxamide + L-glutamate + H(+). The protein operates within amino-acid biosynthesis; L-histidine biosynthesis; L-histidine from 5-phospho-alpha-D-ribose 1-diphosphate: step 5/9. In terms of biological role, IGPS catalyzes the conversion of PRFAR and glutamine to IGP, AICAR and glutamate. The HisF subunit catalyzes the cyclization activity that produces IGP and AICAR from PRFAR using the ammonia provided by the HisH subunit. This Yersinia pseudotuberculosis serotype IB (strain PB1/+) protein is Imidazole glycerol phosphate synthase subunit HisF.